The primary structure comprises 457 residues: Serine--tRNA ligase (457 aa).

252–254 (TAE) lines the L-serine pocket. ATP is bound by residues 283–285 (RKE) and Val299. Residue Glu306 coordinates L-serine. Position 370 to 373 (370 to 373 (EVVS)) interacts with ATP. Thr406 contributes to the L-serine binding site.

The protein belongs to the class-II aminoacyl-tRNA synthetase family. Type-1 seryl-tRNA synthetase subfamily. In terms of assembly, homodimer. The tRNA molecule binds across the dimer.

The protein resides in the cytoplasm. The enzyme catalyses tRNA(Ser) + L-serine + ATP = L-seryl-tRNA(Ser) + AMP + diphosphate + H(+). The catalysed reaction is tRNA(Sec) + L-serine + ATP = L-seryl-tRNA(Sec) + AMP + diphosphate + H(+). Its pathway is aminoacyl-tRNA biosynthesis; selenocysteinyl-tRNA(Sec) biosynthesis; L-seryl-tRNA(Sec) from L-serine and tRNA(Sec): step 1/1. Its function is as follows. Catalyzes the attachment of serine to tRNA(Ser). Is also able to aminoacylate tRNA(Sec) with serine, to form the misacylated tRNA L-seryl-tRNA(Sec), which will be further converted into selenocysteinyl-tRNA(Sec). This is Serine--tRNA ligase from Thermococcus onnurineus (strain NA1).